We begin with the raw amino-acid sequence, 119 residues long: MHILDSVDAASLRTDVPAFRAGDTLKVHVNIIEGKNSRVQVFQGFVLGRQGDGVRETFTVRKVSFGVGVERTFPVHSPIIDKIEVVTKGDVRRAKLYYMRALRGKAAKIKEKRDFTSAK.

The protein belongs to the bacterial ribosomal protein bL19 family.

In terms of biological role, this protein is located at the 30S-50S ribosomal subunit interface and may play a role in the structure and function of the aminoacyl-tRNA binding site. This Pseudarthrobacter chlorophenolicus (strain ATCC 700700 / DSM 12829 / CIP 107037 / JCM 12360 / KCTC 9906 / NCIMB 13794 / A6) (Arthrobacter chlorophenolicus) protein is Large ribosomal subunit protein bL19.